The chain runs to 102 residues: NADH-quinone oxidoreductase subunit K (102 aa).

The next 3 membrane-spanning stretches (helical) occupy residues 5 to 25 (LAHYLAVAAILFTIGVFGIFV), 30 to 50 (IIVILMSIELILLAVNINLVA), and 62 to 82 (IFAMFVLTVAAAEAAVGLAIL).

Belongs to the complex I subunit 4L family. As to quaternary structure, NDH-1 is composed of 14 different subunits. Subunits NuoA, H, J, K, L, M, N constitute the membrane sector of the complex.

Its subcellular location is the cell inner membrane. It carries out the reaction a quinone + NADH + 5 H(+)(in) = a quinol + NAD(+) + 4 H(+)(out). In terms of biological role, NDH-1 shuttles electrons from NADH, via FMN and iron-sulfur (Fe-S) centers, to quinones in the respiratory chain. The immediate electron acceptor for the enzyme in this species is believed to be ubiquinone. Couples the redox reaction to proton translocation (for every two electrons transferred, four hydrogen ions are translocated across the cytoplasmic membrane), and thus conserves the redox energy in a proton gradient. The polypeptide is NADH-quinone oxidoreductase subunit K (Phenylobacterium zucineum (strain HLK1)).